A 298-amino-acid polypeptide reads, in one-letter code: Lipoyl synthase (298 aa).

Residues Cys-40, Cys-45, Cys-51, Cys-67, Cys-71, Cys-74, and Ser-280 each contribute to the [4Fe-4S] cluster site. The 217-residue stretch at 53–269 (AVRKTATFMI…KEIALSKGFS (217 aa)) folds into the Radical SAM core domain.

The protein belongs to the radical SAM superfamily. Lipoyl synthase family. Requires [4Fe-4S] cluster as cofactor.

It is found in the cytoplasm. It catalyses the reaction [[Fe-S] cluster scaffold protein carrying a second [4Fe-4S](2+) cluster] + N(6)-octanoyl-L-lysyl-[protein] + 2 oxidized [2Fe-2S]-[ferredoxin] + 2 S-adenosyl-L-methionine + 4 H(+) = [[Fe-S] cluster scaffold protein] + N(6)-[(R)-dihydrolipoyl]-L-lysyl-[protein] + 4 Fe(3+) + 2 hydrogen sulfide + 2 5'-deoxyadenosine + 2 L-methionine + 2 reduced [2Fe-2S]-[ferredoxin]. The protein operates within protein modification; protein lipoylation via endogenous pathway; protein N(6)-(lipoyl)lysine from octanoyl-[acyl-carrier-protein]. Functionally, catalyzes the radical-mediated insertion of two sulfur atoms into the C-6 and C-8 positions of the octanoyl moiety bound to the lipoyl domains of lipoate-dependent enzymes, thereby converting the octanoylated domains into lipoylated derivatives. The sequence is that of Lipoyl synthase from Bacillus cereus (strain G9842).